The following is a 384-amino-acid chain: 8-amino-7-oxononanoate synthase (384 aa).

A substrate-binding site is contributed by arginine 21. Pyridoxal 5'-phosphate is bound at residue 108-109 (GF). Histidine 133 is a substrate binding site. Pyridoxal 5'-phosphate is bound by residues serine 179, histidine 207, and threonine 233. Position 236 is an N6-(pyridoxal phosphate)lysine (lysine 236). Threonine 352 provides a ligand contact to substrate.

It belongs to the class-II pyridoxal-phosphate-dependent aminotransferase family. BioF subfamily. As to quaternary structure, homodimer. It depends on pyridoxal 5'-phosphate as a cofactor.

It carries out the reaction 6-carboxyhexanoyl-[ACP] + L-alanine + H(+) = (8S)-8-amino-7-oxononanoate + holo-[ACP] + CO2. Its pathway is cofactor biosynthesis; biotin biosynthesis. Its function is as follows. Catalyzes the decarboxylative condensation of pimeloyl-[acyl-carrier protein] and L-alanine to produce 8-amino-7-oxononanoate (AON), [acyl-carrier protein], and carbon dioxide. This is 8-amino-7-oxononanoate synthase from Shigella dysenteriae serotype 1 (strain Sd197).